Reading from the N-terminus, the 253-residue chain is Imidazole glycerol phosphate synthase subunit HisF (253 aa).

Residues aspartate 11 and aspartate 130 contribute to the active site.

Belongs to the HisA/HisF family. Heterodimer of HisH and HisF.

It localises to the cytoplasm. The enzyme catalyses 5-[(5-phospho-1-deoxy-D-ribulos-1-ylimino)methylamino]-1-(5-phospho-beta-D-ribosyl)imidazole-4-carboxamide + L-glutamine = D-erythro-1-(imidazol-4-yl)glycerol 3-phosphate + 5-amino-1-(5-phospho-beta-D-ribosyl)imidazole-4-carboxamide + L-glutamate + H(+). It functions in the pathway amino-acid biosynthesis; L-histidine biosynthesis; L-histidine from 5-phospho-alpha-D-ribose 1-diphosphate: step 5/9. Its function is as follows. IGPS catalyzes the conversion of PRFAR and glutamine to IGP, AICAR and glutamate. The HisF subunit catalyzes the cyclization activity that produces IGP and AICAR from PRFAR using the ammonia provided by the HisH subunit. The sequence is that of Imidazole glycerol phosphate synthase subunit HisF from Ruegeria sp. (strain TM1040) (Silicibacter sp.).